The chain runs to 686 residues: MKALLFLLTLFLILPNPISAIDFIFNGFNDSSSNVSLFGIATIESKILTLTNQTSFATGRALYNRTIRTKDPITSSVLPFSTSFIFTMAPYKNTLPGHGIVFLFAPSTGINGSSSAQHLGLFNLTNNGNPSNHIFGVEFDVFANQEFSDIDANHVGIDVNSLHSVYSNTSGYWSDDGVVFKPLKLNDGRNYQVWIDYRDFVVNVTMQVAGKIRPKIPLLSTSLNLSDVVEDEMFVGFTAATGRLVQSHKILAWSFSNSNFSLSNSLITTGLPSFVLPKDSIVKAKWFVFVLVLICFLVVALVGLVLFAVVRKRLERARKRALMEDWEMEYWPHRIPYEEIESGTKGFDEKNVIGIGGNGKVYKGLLQGGVVEVAVKRISQESSDGMREFVAEISSLGRLKHRNLVSLRGWCKKEVGSFMLVYDYMENGSLDRWIFENDEKITTLSCEERIRILKGVASGILYLHEGWESKVLHRDIKASNVLLDRDMIPRLSDFGLARVHGHEQPVRTTRVVGTAGYLAPEVVKTGRASTQTDVFAYGILVLEVMCGRRPIEEGKKPLMDWVWGLMERGEILNGLDPQMMMTQGVTEVIDEAERVLQLGLLCAHPDPAKRPSMRQVVQVFEGDKAEIFEAESSEDVESWMLMKMGSRGSSREFWYGSSSHPTIEQIRLQSLSVSLSSWNSSILEGR.

Positions 1-20 are cleaved as a signal peptide; that stretch reads MKALLFLLTLFLILPNPISA. Positions 21-256 are legume-lectin like; it reads IDFIFNGFND…SHKILAWSFS (236 aa). The Extracellular portion of the chain corresponds to 21 to 286; that stretch reads IDFIFNGFND…PKDSIVKAKW (266 aa). 10 N-linked (GlcNAc...) asparagine glycosylation sites follow: N29, N34, N52, N64, N111, N123, N168, N203, N224, and N259. A helical transmembrane segment spans residues 287–307; sequence FVFVLVLICFLVVALVGLVLF. The Cytoplasmic segment spans residues 308 to 686; it reads AVVRKRLERA…SWNSSILEGR (379 aa). The 282-residue stretch at 347–628 folds into the Protein kinase domain; that stretch reads FDEKNVIGIG…VFEGDKAEIF (282 aa). Residues 353–361 and K376 each bind ATP; that span reads IGIGGNGKV. D475 acts as the Proton acceptor in catalysis.

This sequence in the C-terminal section; belongs to the protein kinase superfamily. Ser/Thr protein kinase family. The protein in the N-terminal section; belongs to the leguminous lectin family.

It localises to the cell membrane. The catalysed reaction is L-seryl-[protein] + ATP = O-phospho-L-seryl-[protein] + ADP + H(+). The enzyme catalyses L-threonyl-[protein] + ATP = O-phospho-L-threonyl-[protein] + ADP + H(+). The protein is L-type lectin-domain containing receptor kinase VII.1 (LECRK71) of Arabidopsis thaliana (Mouse-ear cress).